Consider the following 538-residue polypeptide: Natural resistance-associated macrophage protein 1 (538 aa).

The segment at 1–36 (MTGDTDPPKQSRTQYGSISSSPSPGPPQVPPGGTYL) is disordered. Residues 1 to 54 (MTGDTDPPKQSRTQYGSISSSPSPGPPQVPPGGTYLSEKIPIPNAEPGTFSLRK) are Cytoplasmic-facing. The chain crosses the membrane as a helical span at residues 55–75 (LWAFTGPGFLMSIAYLDPGNI). Residues 76 to 81 (QSDLQA) are Extracellular-facing. A helical transmembrane segment spans residues 82 to 102 (GAVAGFKLLWVLLWATVLGLL). Topologically, residues 103–139 (CQRLAARLGVVTGKDLGEICHLYYPKVPRTLLWLNME) are cytoplasmic. The helical transmembrane segment at 140 to 160 (LAIVGSDMQEVIGTAIAFNLL) threads the bilayer. Over 161–164 (SAGR) the chain is Extracellular. Residues 165 to 185 (IPLWGGVLITVVDTFFFLYLN) traverse the membrane as a helical segment. Residues 186–193 (NYGLRKLE) are Cytoplasmic-facing. The helical transmembrane segment at 194-214 (AFFAFLIAIMAFTFGYEYVVA) threads the bilayer. Over 215-240 (RPAQGALLRGLFLPSCSGCGQPELLQ) the chain is Extracellular. A helical membrane pass occupies residues 241 to 261 (AVGIVGAIIMPHNIYLHSALV). Topologically, residues 262-286 (KSREVDRTRREDIREANMYFLIEST) are cytoplasmic. Residues 287-307 (IALFVSFFINLFVMAVFGQAF) traverse the membrane as a helical segment. Residues 308–346 (YQQTNQAAFNICANSSLHDYAKIFPRNNLTVAVDFYQGG) lie on the Extracellular side of the membrane. N-linked (GlcNAc...) asparagine glycosylation is found at Asn-321 and Asn-335. A helical transmembrane segment spans residues 347–367 (VILGCLFGPAALYIWAVGLLA). Topologically, residues 368–394 (AGQSSTMTGTYAGQFVMEGFLKLRWSR) are cytoplasmic. The helical transmembrane segment at 395–415 (FARLLLTRSCAILPALLVAVF) threads the bilayer. The Extracellular segment spans residues 416-432 (KELQDLSSLNDLLNVLQ). Residues 433 to 453 (SLLLPFAVLPILTFTSMPALM) form a helical membrane-spanning segment. Over 454–468 (QEFASGRVNKVITSS) the chain is Cytoplasmic. Residues 469–489 (IMLLVCAINFYFLVSYLPSLP) traverse the membrane as a helical segment. Residues 490–492 (HPA) are Extracellular-facing. A helical transmembrane segment spans residues 493 to 513 (YFGLVALLAVIYLGLTTYLVW). Over 514 to 538 (TCLIAHGATLLVHSSHQHFLYGLLE) the chain is Cytoplasmic.

This sequence belongs to the NRAMP family.

It is found in the late endosome membrane. The protein localises to the lysosome membrane. It carries out the reaction Zn(2+)(in) + H(+)(out) = Zn(2+)(out) + H(+)(in). It catalyses the reaction Fe(2+)(in) + H(+)(out) = Fe(2+)(out) + H(+)(in). The catalysed reaction is Mn(2+)(in) + H(+)(out) = Mn(2+)(out) + H(+)(in). Macrophage-specific antiporter that fluxes metal ions in either direction against a proton gradient. Localized to late endosomal lysosomal membranes, delivers bivalent cations from the cytosol into these acidic compartments where they may directly affect antimicrobial activity. Involved in iron metabolism and host natural resistance to infection with intracellular parasites. Pathogen resistance involves sequestration of Fe(2+) and Mn(2+), cofactors of both prokaryotic and eukaryotic catalases and superoxide dismutases, not only to protect the macrophage against its own generation of reactive oxygen species, but to deny the cations to the pathogen for synthesis of its protective enzymes. This is Natural resistance-associated macrophage protein 1 (SLC11A1) from Sus scrofa (Pig).